The chain runs to 591 residues: Aspartate--tRNA ligase (591 aa).

E173 is an L-aspartate binding site. Residues 197 to 200 form an aspartate region; sequence QLFK. R219 lines the L-aspartate pocket. Residues 219–221 and Q228 contribute to the ATP site; that span reads RDE. H448 provides a ligand contact to L-aspartate. E482 contributes to the ATP binding site. Position 489 (R489) interacts with L-aspartate. 534-537 lines the ATP pocket; it reads GLDR.

This sequence belongs to the class-II aminoacyl-tRNA synthetase family. Type 1 subfamily. Homodimer.

It localises to the cytoplasm. It carries out the reaction tRNA(Asp) + L-aspartate + ATP = L-aspartyl-tRNA(Asp) + AMP + diphosphate. Functionally, catalyzes the attachment of L-aspartate to tRNA(Asp) in a two-step reaction: L-aspartate is first activated by ATP to form Asp-AMP and then transferred to the acceptor end of tRNA(Asp). This chain is Aspartate--tRNA ligase, found in Shewanella sp. (strain MR-7).